A 360-amino-acid chain; its full sequence is Phospho-N-acetylmuramoyl-pentapeptide-transferase (360 aa).

The next 10 helical transmembrane spans lie at 26–46, 70–90, 94–114, 132–152, 168–188, 199–219, 236–256, 263–283, 288–308, and 338–358; these read AILS…IMIK, GTPT…ILLW, SNPY…IGFV, WKYF…YAYG, IMPQ…VGTS, GLAI…AWAT, ASEL…FLWF, VFMG…IAVL, LILV…ILQV, and VIVR…ATLK.

This sequence belongs to the glycosyltransferase 4 family. MraY subfamily. It depends on Mg(2+) as a cofactor.

The protein localises to the cell inner membrane. It catalyses the reaction UDP-N-acetyl-alpha-D-muramoyl-L-alanyl-gamma-D-glutamyl-meso-2,6-diaminopimeloyl-D-alanyl-D-alanine + di-trans,octa-cis-undecaprenyl phosphate = di-trans,octa-cis-undecaprenyl diphospho-N-acetyl-alpha-D-muramoyl-L-alanyl-D-glutamyl-meso-2,6-diaminopimeloyl-D-alanyl-D-alanine + UMP. Its pathway is cell wall biogenesis; peptidoglycan biosynthesis. Its function is as follows. Catalyzes the initial step of the lipid cycle reactions in the biosynthesis of the cell wall peptidoglycan: transfers peptidoglycan precursor phospho-MurNAc-pentapeptide from UDP-MurNAc-pentapeptide onto the lipid carrier undecaprenyl phosphate, yielding undecaprenyl-pyrophosphoryl-MurNAc-pentapeptide, known as lipid I. The protein is Phospho-N-acetylmuramoyl-pentapeptide-transferase of Vibrio campbellii (strain ATCC BAA-1116).